Reading from the N-terminus, the 289-residue chain is ATP synthase subunit a (289 aa).

Transmembrane regions (helical) follow at residues 41 to 61 (KATA…WLGF), 101 to 121 (YLLV…IPAA), 129 to 149 (IAVP…AGIK), 166 to 186 (TAPL…TLIV), 189 to 209 (FTLA…LLVF), 222 to 242 (FVFG…ELVI), and 244 to 264 (ALQA…AMAH).

The protein belongs to the ATPase A chain family. F-type ATPases have 2 components, CF(1) - the catalytic core - and CF(0) - the membrane proton channel. CF(1) has five subunits: alpha(3), beta(3), gamma(1), delta(1), epsilon(1). CF(0) has three main subunits: a(1), b(2) and c(9-12). The alpha and beta chains form an alternating ring which encloses part of the gamma chain. CF(1) is attached to CF(0) by a central stalk formed by the gamma and epsilon chains, while a peripheral stalk is formed by the delta and b chains.

It is found in the cell membrane. In terms of biological role, key component of the proton channel; it plays a direct role in the translocation of protons across the membrane. This Frankia alni (strain DSM 45986 / CECT 9034 / ACN14a) protein is ATP synthase subunit a.